We begin with the raw amino-acid sequence, 154 residues long: Nuclear cap-binding protein subunit 2 (154 aa).

The disordered stretch occupies residues 1–23 (MTASVDLSSYRDQHFKGSRSEQE). Over residues 9–23 (SYRDQHFKGSRSEQE) the composition is skewed to basic and acidic residues. MRNA is bound by residues Tyr10, Tyr33, 102 to 106 (RVDWD), 113 to 117 (RQYGR), and 123 to 124 (QV). One can recognise an RRM domain in the interval 30-108 (TTLYVGNLSF…RLIRVDWDAG (79 aa)).

This sequence belongs to the RRM NCBP2 family. As to quaternary structure, component of the nuclear cap-binding complex (CBC), a heterodimer composed of Cbp80 and Cbp20 that interacts with m7GpppG-capped RNA. Interacts with Ars2.

Its subcellular location is the nucleus. Its function is as follows. Component of the cap-binding complex (CBC), which binds co-transcriptionally to the 5' cap of pre-mRNAs and is involved in various processes such as pre-mRNA splicing and RNA-mediated gene silencing (RNAi). The CBC complex is involved in miRNA-mediated RNA interference via its interaction with Ars2 and is required for primary microRNAs (miRNAs) processing. Also involved in innate immunity via the short interfering RNAs (siRNAs) processing machinery by restricting the viral RNA production. In the CBC complex, Cbp20 recognizes and binds capped RNAs (m7GpppG-capped RNA) but requires Cbp80 to stabilize the movement of its N-terminal loop and lock the CBC into a high affinity cap-binding state with the cap structure. The protein is Nuclear cap-binding protein subunit 2 (Cbp20) of Drosophila grimshawi (Hawaiian fruit fly).